We begin with the raw amino-acid sequence, 185 residues long: Protein GrpE (185 aa).

Residues 1 to 12 are compositionally biased toward basic and acidic residues; it reads MADEQLNEKDLN. Residues 1-22 form a disordered region; that stretch reads MADEQLNEKDLNVEETGAGNAA.

The protein belongs to the GrpE family. In terms of assembly, homodimer.

It localises to the cytoplasm. Participates actively in the response to hyperosmotic and heat shock by preventing the aggregation of stress-denatured proteins, in association with DnaK and GrpE. It is the nucleotide exchange factor for DnaK and may function as a thermosensor. Unfolded proteins bind initially to DnaJ; upon interaction with the DnaJ-bound protein, DnaK hydrolyzes its bound ATP, resulting in the formation of a stable complex. GrpE releases ADP from DnaK; ATP binding to DnaK triggers the release of the substrate protein, thus completing the reaction cycle. Several rounds of ATP-dependent interactions between DnaJ, DnaK and GrpE are required for fully efficient folding. The protein is Protein GrpE of Pseudomonas putida (strain ATCC 700007 / DSM 6899 / JCM 31910 / BCRC 17059 / LMG 24140 / F1).